The sequence spans 165 residues: UPF0303 protein Bcep18194_A4700 (165 aa).

This sequence belongs to the UPF0303 family.

The sequence is that of UPF0303 protein Bcep18194_A4700 from Burkholderia lata (strain ATCC 17760 / DSM 23089 / LMG 22485 / NCIMB 9086 / R18194 / 383).